The chain runs to 257 residues: Thiazole synthase (257 aa).

Residue Lys96 is the Schiff-base intermediate with DXP of the active site. 1-deoxy-D-xylulose 5-phosphate contacts are provided by residues Gly157, Ala184–Gly185, and Asn206–Thr207.

This sequence belongs to the ThiG family. As to quaternary structure, homotetramer. Forms heterodimers with either ThiH or ThiS.

The protein localises to the cytoplasm. The enzyme catalyses [ThiS sulfur-carrier protein]-C-terminal-Gly-aminoethanethioate + 2-iminoacetate + 1-deoxy-D-xylulose 5-phosphate = [ThiS sulfur-carrier protein]-C-terminal Gly-Gly + 2-[(2R,5Z)-2-carboxy-4-methylthiazol-5(2H)-ylidene]ethyl phosphate + 2 H2O + H(+). Its pathway is cofactor biosynthesis; thiamine diphosphate biosynthesis. Its function is as follows. Catalyzes the rearrangement of 1-deoxy-D-xylulose 5-phosphate (DXP) to produce the thiazole phosphate moiety of thiamine. Sulfur is provided by the thiocarboxylate moiety of the carrier protein ThiS. In vitro, sulfur can be provided by H(2)S. The protein is Thiazole synthase of Bartonella henselae (strain ATCC 49882 / DSM 28221 / CCUG 30454 / Houston 1) (Rochalimaea henselae).